The primary structure comprises 3814 residues: Hybrid PKS-NRPS synthetase pyvA (3814 aa).

The 340-residue stretch at 1 to 340 folds into the Ketosynthase family 3 (KS3) domain; the sequence is MDPQQRLLLE…GSNAHVILES (340 aa). Active-site for beta-ketoacyl synthase activity residues include cysteine 87, histidine 222, and histidine 261. The segment at 441 to 758 is malonyl-CoA:ACP transacylase (MAT) domain; sequence VFTGQGAQWH…PYFASLSRGV (318 aa). Serine 533 acts as the For malonyltransferase activity in catalysis. Residues 835-970 are N-terminal hotdog fold; sequence HPILGAKMPG…GLISISTATT (136 aa). The dehydratase (DH) domain stretch occupies residues 835 to 1149; sequence HPILGAKMPG…LRLTSLSNGR (315 aa). The 317-residue stretch at 835–1151 folds into the PKS/mFAS DH domain; it reads HPILGAKMPG…LTSLSNGRAA (317 aa). Residue histidine 867 is the Proton acceptor; for dehydratase activity of the active site. Residues 970 to 993 are disordered; it reads TADGAPSRKPYRQHPQPQPGRMST. The interval 991 to 1151 is C-terminal hotdog fold; sequence MSTASFPAQS…LTSLSNGRAA (161 aa). The Proton donor; for dehydratase activity role is filled by aspartate 1057. The enoyl reductase (ER) domain stretch occupies residues 1520-1836; the sequence is GLLETLVWED…MGRHTGKVVL (317 aa). A ketoreductase (KR) domain region spans residues 1864-2036; the sequence is TYLLVGGLGG…PASSMNCGRI (173 aa). The Carrier 1 domain occupies 2141-2220; the sequence is IDLSDRVALL…ALVEKAIGLF (80 aa). Serine 2180 bears the O-(pantetheine 4'-phosphoryl)serine mark. Positions 2228-2238 are enriched in low complexity; sequence QQQQQSVQSSS. The segment at 2228–2270 is disordered; sequence QQQQQSVQSSSAPSNDDQSPTFNKNLDSQDPSTSLQIPKADCS. Over residues 2239–2263 the composition is skewed to polar residues; sequence APSNDDQSPTFNKNLDSQDPSTSLQ. A condensation (C) domain 7 region spans residues 2273–2718; that stretch reads LPMSTFQNRL…PEVRLAGTLE (446 aa). The segment at 2738–3149 is adenylation (A) domain 8; that stretch reads PLNLPRRIVE…DGQLEFLGRI (412 aa). The interval 3257-3304 is disordered; sequence SGKTDRRALGASQAPGTPPQHGAGPAAASTLDPAQAQAQDRADEEVGD. One can recognise a Carrier 2 domain in the interval 3304–3379; the sequence is DRTMATVTRV…QLVELVHSKV (76 aa). O-(pantetheine 4'-phosphoryl)serine is present on serine 3339. The tract at residues 3428-3680 is thioesterase (TE) domain; the sequence is MTGAESFTGI…VDLVPVNYLT (253 aa).

It in the C-terminal section; belongs to the NRP synthetase family.

It participates in secondary metabolite biosynthesis. In terms of biological role, hybrid PKS-NRPS synthetase; part of the gene cluster that mediates the biosynthesis of pyranoviolin A, a pyranonigrin analog with a C-3 methoxy group. Initially, the PKS portion of pyvA synthesizes C-10 carbon chain from 5 molecules of malonyl-CoA, which is then condensed with the thiolation (T) domain-bound glycine activated by the adenylation (A) domain. The subsequent chain release by Dieckmann condensation (DKC) could be catalyzed by the TE domain present at the C-terminus of pyvA and/or the alpha/beta hydrolase pyvD, installing the tetramic acid moiety. The FAD-dependent monooxygenase pyvC next epoxidizes one of the olefins of the polyketide part, and the epoxide ring-opening induces the dihydro-gamma-pyrone ring formation. The cytochrome P450 monooxygeanse pyvB would be responsible for the 2 consecutive reactions, in which the dihydro-gamma-pyrone is oxidized to gamma-pyrone and C-7 is hydroxylated to yield pyranonigrin F. Finally, the O-methyltransferase pyvH methylates the C-3 hydroxy group to complete the biosynthesis. The polypeptide is Hybrid PKS-NRPS synthetase pyvA (Aspergillus violaceofuscus (strain CBS 115571)).